Here is a 397-residue protein sequence, read N- to C-terminus: Tryptophan synthase beta chain (397 aa).

N6-(pyridoxal phosphate)lysine is present on lysine 91.

This sequence belongs to the TrpB family. As to quaternary structure, tetramer of two alpha and two beta chains. Pyridoxal 5'-phosphate is required as a cofactor.

It carries out the reaction (1S,2R)-1-C-(indol-3-yl)glycerol 3-phosphate + L-serine = D-glyceraldehyde 3-phosphate + L-tryptophan + H2O. The protein operates within amino-acid biosynthesis; L-tryptophan biosynthesis; L-tryptophan from chorismate: step 5/5. Its function is as follows. The beta subunit is responsible for the synthesis of L-tryptophan from indole and L-serine. This Bacillus thuringiensis (strain Al Hakam) protein is Tryptophan synthase beta chain.